We begin with the raw amino-acid sequence, 440 residues long: MSQETIFALASGAGRAAIAVIRISGPATRNTVTHLCGTLPPQRKSSLRRLRNRSGEILDQGIILWFAGPGSFTGEDCAELHLHGGNAVIEGMADALVDLGLRPAEAGEFTRRAFLNGKLDLTEAEAVADLIDAETSAQRRQALQQLDGGLSRQLETWTATLTRVLAWQETLIDFPDEDLPAEVDAALRTDLLLLRQEMAQALNEGAKAEKLREGLIFTILGKPNAGKSSLLNSLASRDAAIVSSQPGTTRDTIEVRLVLAGVPVTLIDTAGLRDSADSIEAEGVRRALARAESADLVLRTVDISTATEADFSAEQWPGSSEARSLMIGTKSDLPYTPPSSPDIVLVSTLTGDGMERLKTMLEAEARALTSHATGAPLTRARHRAALQDAIQHLEDAESARLEELRAEEIRLARQAVGRVTGQIGVEQILDHVFSSFCIGK.

Arg22, Glu79, and Lys118 together coordinate (6S)-5-formyl-5,6,7,8-tetrahydrofolate. The TrmE-type G domain occupies 214–366 (GLIFTILGKP…LKTMLEAEAR (153 aa)). Residues 224 to 229 (NAGKSS), 243 to 249 (SSQPGTT), and 268 to 271 (DTAG) each bind GTP. Positions 228 and 249 each coordinate Mg(2+). Position 440 (Lys440) interacts with (6S)-5-formyl-5,6,7,8-tetrahydrofolate.

It belongs to the TRAFAC class TrmE-Era-EngA-EngB-Septin-like GTPase superfamily. TrmE GTPase family. As to quaternary structure, homodimer. Heterotetramer of two MnmE and two MnmG subunits. It depends on K(+) as a cofactor.

It is found in the cytoplasm. Exhibits a very high intrinsic GTPase hydrolysis rate. Involved in the addition of a carboxymethylaminomethyl (cmnm) group at the wobble position (U34) of certain tRNAs, forming tRNA-cmnm(5)s(2)U34. The chain is tRNA modification GTPase MnmE from Granulibacter bethesdensis (strain ATCC BAA-1260 / CGDNIH1).